The primary structure comprises 316 residues: BTB/POZ domain-containing adapter for CUL3-mediated RhoA degradation protein 2 (316 aa).

Residues 28 to 96 (KYVQLNVGGS…LRDDTITLPQ (69 aa)) enclose the BTB domain. Over residues 268-279 (EATSRSRSQASP) the composition is skewed to polar residues. The segment at 268 to 287 (EATSRSRSQASPSEDEETFE) is disordered. Ser278 bears the Phosphoserine mark. Ser280 is modified (phosphoserine; by CK2).

It belongs to the BACURD family. Component of the BCR(TNFAIP1) E3 ubiquitin ligase complex, at least composed of CUL3, TNFAIP1/BACURD2 and RBX1. Interacts with RHOA; with a preference for RhoA-GDP. Interacts with RHOB. Interacts with PCNA. Interacts with CSNK2B. Phosphorylation at Ser-280 by CK2 facilitates the nucleus localization and increases interaction with PCNA.

The protein resides in the cytoplasm. It localises to the nucleus. It is found in the endosome. The protein operates within protein modification; protein ubiquitination. Its function is as follows. Substrate-specific adapter of a BCR (BTB-CUL3-RBX1) E3 ubiquitin-protein ligase complex involved in regulation of cytoskeleton structure. The BCR(TNFAIP1) E3 ubiquitin ligase complex mediates the ubiquitination of RHOA, leading to its degradation by the proteasome, thereby regulating the actin cytoskeleton and cell migration. Its interaction with RHOB may regulate apoptosis. May enhance the PCNA-dependent DNA polymerase delta activity. This is BTB/POZ domain-containing adapter for CUL3-mediated RhoA degradation protein 2 (TNFAIP1) from Homo sapiens (Human).